Consider the following 485-residue polypeptide: Glutamyl-tRNA(Gln) amidotransferase subunit A (485 aa).

Catalysis depends on charge relay system residues Lys79 and Ser154. Ser178 serves as the catalytic Acyl-ester intermediate.

Belongs to the amidase family. GatA subfamily. Heterotrimer of A, B and C subunits.

The enzyme catalyses L-glutamyl-tRNA(Gln) + L-glutamine + ATP + H2O = L-glutaminyl-tRNA(Gln) + L-glutamate + ADP + phosphate + H(+). Allows the formation of correctly charged Gln-tRNA(Gln) through the transamidation of misacylated Glu-tRNA(Gln) in organisms which lack glutaminyl-tRNA synthetase. The reaction takes place in the presence of glutamine and ATP through an activated gamma-phospho-Glu-tRNA(Gln). The sequence is that of Glutamyl-tRNA(Gln) amidotransferase subunit A from Bacillus pumilus (strain SAFR-032).